The following is a 1029-amino-acid chain: Error-prone DNA polymerase (1029 aa).

The protein belongs to the DNA polymerase type-C family. DnaE2 subfamily.

The protein resides in the cytoplasm. The enzyme catalyses DNA(n) + a 2'-deoxyribonucleoside 5'-triphosphate = DNA(n+1) + diphosphate. Functionally, DNA polymerase involved in damage-induced mutagenesis and translesion synthesis (TLS). It is not the major replicative DNA polymerase. This chain is Error-prone DNA polymerase, found in Saccharophagus degradans (strain 2-40 / ATCC 43961 / DSM 17024).